Reading from the N-terminus, the 141-residue chain is ATP synthase epsilon chain (141 aa).

The protein belongs to the ATPase epsilon chain family. As to quaternary structure, F-type ATPases have 2 components, CF(1) - the catalytic core - and CF(0) - the membrane proton channel. CF(1) has five subunits: alpha(3), beta(3), gamma(1), delta(1), epsilon(1). CF(0) has three main subunits: a, b and c.

It localises to the cell inner membrane. Produces ATP from ADP in the presence of a proton gradient across the membrane. The polypeptide is ATP synthase epsilon chain (Bordetella petrii (strain ATCC BAA-461 / DSM 12804 / CCUG 43448)).